A 490-amino-acid polypeptide reads, in one-letter code: Cytochrome P450 2C55 (490 aa).

Residue C435 coordinates heme.

Belongs to the cytochrome P450 family. It depends on heme as a cofactor.

Its subcellular location is the endoplasmic reticulum membrane. It is found in the microsome membrane. The enzyme catalyses an organic molecule + reduced [NADPH--hemoprotein reductase] + O2 = an alcohol + oxidized [NADPH--hemoprotein reductase] + H2O + H(+). Functionally, metabolizes arachidonic acid mainly to 19-hydroxyeicosatetraenoic acid (HETE). In Rattus norvegicus (Rat), this protein is Cytochrome P450 2C55 (Cyp2c55).